The primary structure comprises 388 residues: MNLHEYQAKALLKKYGVSVQEGILARSAEEAVAAFEQLGGKFAVIKAQVHAGGRGKAGGVKVVKSKEEAADYANQLIGTNLVTYQTDANGQPVNSVLVCEDVYPVERELYLGAVVDRSSRRVTFMASTEGGVEIEKVAEETPEKIIKVEVDPLVGLQPFQAREVAFALGLKDKQIGQFVKLMAGAYQAFVENDFALFEINPLSVRENGDILAVDAKIGIDSNALYRLPEIAASRDKSQENERELKASEFELNYVALEGNIGCMVNGAGLAMATMDIIKLYGGQPANFLDVGGGATKERVIEAFKLILADTSVQGVLINIFGGIVRCDMIAEAIIAAVQEVNVTVPVVVRLEGNNAELGAKILDESGLKLTSANGLSDAAEKIVAAVKG.

In terms of domain architecture, ATP-grasp spans 9-245 (KALLKKYGVS…KSQENERELK (237 aa)). ATP-binding positions include lysine 46, 53-55 (GRG), glutamate 100, tyrosine 103, and glutamate 108. Residues asparagine 200 and aspartate 214 each contribute to the Mg(2+) site. Residues asparagine 265 and 322–324 (GIV) contribute to the substrate site.

The protein belongs to the succinate/malate CoA ligase beta subunit family. In terms of assembly, heterotetramer of two alpha and two beta subunits. Mg(2+) is required as a cofactor.

It catalyses the reaction succinate + ATP + CoA = succinyl-CoA + ADP + phosphate. The enzyme catalyses GTP + succinate + CoA = succinyl-CoA + GDP + phosphate. The protein operates within carbohydrate metabolism; tricarboxylic acid cycle; succinate from succinyl-CoA (ligase route): step 1/1. Succinyl-CoA synthetase functions in the citric acid cycle (TCA), coupling the hydrolysis of succinyl-CoA to the synthesis of either ATP or GTP and thus represents the only step of substrate-level phosphorylation in the TCA. The beta subunit provides nucleotide specificity of the enzyme and binds the substrate succinate, while the binding sites for coenzyme A and phosphate are found in the alpha subunit. This is Succinate--CoA ligase [ADP-forming] subunit beta from Acinetobacter baylyi (strain ATCC 33305 / BD413 / ADP1).